The chain runs to 73 residues: Translation initiation factor IF-1 (73 aa).

In terms of domain architecture, S1-like spans 1–72; sequence MSKKDVIELE…SRGRIVYRKK (72 aa).

It belongs to the IF-1 family. As to quaternary structure, component of the 30S ribosomal translation pre-initiation complex which assembles on the 30S ribosome in the order IF-2 and IF-3, IF-1 and N-formylmethionyl-tRNA(fMet); mRNA recruitment can occur at any time during PIC assembly.

The protein localises to the cytoplasm. Its function is as follows. One of the essential components for the initiation of protein synthesis. Stabilizes the binding of IF-2 and IF-3 on the 30S subunit to which N-formylmethionyl-tRNA(fMet) subsequently binds. Helps modulate mRNA selection, yielding the 30S pre-initiation complex (PIC). Upon addition of the 50S ribosomal subunit IF-1, IF-2 and IF-3 are released leaving the mature 70S translation initiation complex. In Fusobacterium nucleatum subsp. nucleatum (strain ATCC 25586 / DSM 15643 / BCRC 10681 / CIP 101130 / JCM 8532 / KCTC 2640 / LMG 13131 / VPI 4355), this protein is Translation initiation factor IF-1.